Here is a 340-residue protein sequence, read N- to C-terminus: Phosphate acyltransferase (340 aa).

The protein belongs to the PlsX family. Homodimer. Probably interacts with PlsY.

It is found in the cytoplasm. It carries out the reaction a fatty acyl-[ACP] + phosphate = an acyl phosphate + holo-[ACP]. It participates in lipid metabolism; phospholipid metabolism. Functionally, catalyzes the reversible formation of acyl-phosphate (acyl-PO(4)) from acyl-[acyl-carrier-protein] (acyl-ACP). This enzyme utilizes acyl-ACP as fatty acyl donor, but not acyl-CoA. This Pseudomonas syringae pv. tomato (strain ATCC BAA-871 / DC3000) protein is Phosphate acyltransferase.